Reading from the N-terminus, the 174-residue chain is ATP synthase subunit b (174 aa).

The helical transmembrane segment at 18-38 threads the bilayer; it reads IIVVSGSFLILMFLLKHFAWG.

The protein belongs to the ATPase B chain family. As to quaternary structure, F-type ATPases have 2 components, F(1) - the catalytic core - and F(0) - the membrane proton channel. F(1) has five subunits: alpha(3), beta(3), gamma(1), delta(1), epsilon(1). F(0) has three main subunits: a(1), b(2) and c(10-14). The alpha and beta chains form an alternating ring which encloses part of the gamma chain. F(1) is attached to F(0) by a central stalk formed by the gamma and epsilon chains, while a peripheral stalk is formed by the delta and b chains.

Its subcellular location is the cell membrane. F(1)F(0) ATP synthase produces ATP from ADP in the presence of a proton or sodium gradient. F-type ATPases consist of two structural domains, F(1) containing the extramembraneous catalytic core and F(0) containing the membrane proton channel, linked together by a central stalk and a peripheral stalk. During catalysis, ATP synthesis in the catalytic domain of F(1) is coupled via a rotary mechanism of the central stalk subunits to proton translocation. In terms of biological role, component of the F(0) channel, it forms part of the peripheral stalk, linking F(1) to F(0). The sequence is that of ATP synthase subunit b from Enterococcus hirae (strain ATCC 9790 / DSM 20160 / JCM 8729 / LMG 6399 / NBRC 3181 / NCIMB 6459 / NCDO 1258 / NCTC 12367 / WDCM 00089 / R).